Consider the following 139-residue polypeptide: ATP synthase epsilon chain (139 aa).

The protein belongs to the ATPase epsilon chain family. F-type ATPases have 2 components, CF(1) - the catalytic core - and CF(0) - the membrane proton channel. CF(1) has five subunits: alpha(3), beta(3), gamma(1), delta(1), epsilon(1). CF(0) has three main subunits: a, b and c.

Its subcellular location is the cell inner membrane. In terms of biological role, produces ATP from ADP in the presence of a proton gradient across the membrane. This chain is ATP synthase epsilon chain, found in Salmonella arizonae (strain ATCC BAA-731 / CDC346-86 / RSK2980).